The chain runs to 57 residues: Large ribosomal subunit protein eL20 (57 aa).

The protein belongs to the eukaryotic ribosomal protein eL20 family. In terms of assembly, part of the 50S ribosomal subunit. Binds 23S rRNA.

The chain is Large ribosomal subunit protein eL20 from Archaeoglobus fulgidus (strain ATCC 49558 / DSM 4304 / JCM 9628 / NBRC 100126 / VC-16).